Here is a 563-residue protein sequence, read N- to C-terminus: Arginine--tRNA ligase (563 aa).

The 'HIGH' region motif lies at 121–131; it reads PNIAKPFSIGH.

It belongs to the class-I aminoacyl-tRNA synthetase family. In terms of assembly, monomer.

It localises to the cytoplasm. It catalyses the reaction tRNA(Arg) + L-arginine + ATP = L-arginyl-tRNA(Arg) + AMP + diphosphate. In Streptococcus pyogenes serotype M1, this protein is Arginine--tRNA ligase.